A 150-amino-acid chain; its full sequence is Large ribosomal subunit protein bL9 (150 aa).

The protein belongs to the bacterial ribosomal protein bL9 family.

In terms of biological role, binds to the 23S rRNA. This is Large ribosomal subunit protein bL9 from Methylibium petroleiphilum (strain ATCC BAA-1232 / LMG 22953 / PM1).